Reading from the N-terminus, the 965-residue chain is Iron-responsive element-binding protein 2 (965 aa).

Residues 142 to 170 (NAPNPGGGEAQKPTAKLSPLKGQPRKLPC) form a disordered region. The [4Fe-4S] cluster site is built by Cys514, Cys580, and Cys583.

Belongs to the aconitase/IPM isomerase family. [4Fe-4S] cluster is required as a cofactor. Ubiquitinated and degraded by the proteasome in presence of high level of iron and oxygen.

The protein resides in the cytoplasm. Functionally, RNA-binding protein that binds to iron-responsive elements (IRES), which are stem-loop structures found in the 5'-UTR of ferritin, and delta aminolevulinic acid synthase mRNAs, and in the 3'-UTR of transferrin receptor mRNA. Binding to the IRE element in ferritin results in the repression of its mRNA translation. Binding of the protein to the transferrin receptor mRNA inhibits the degradation of this otherwise rapidly degraded mRNA. The protein is Iron-responsive element-binding protein 2 (IREB2) of Gallus gallus (Chicken).